The primary structure comprises 405 residues: Cysteine desulfurase IscS (405 aa).

Pyridoxal 5'-phosphate-binding positions include 75–76, asparagine 156, glutamine 184, and 204–206; these read AT and SAH. Lysine 207 is modified (N6-(pyridoxal phosphate)lysine). Residue threonine 244 coordinates pyridoxal 5'-phosphate. Cysteine 329 serves as the catalytic Cysteine persulfide intermediate. Residue cysteine 329 participates in [2Fe-2S] cluster binding.

This sequence belongs to the class-V pyridoxal-phosphate-dependent aminotransferase family. NifS/IscS subfamily. Homodimer. Forms a heterotetramer with IscU, interacts with other sulfur acceptors. Requires pyridoxal 5'-phosphate as cofactor.

It is found in the cytoplasm. It carries out the reaction (sulfur carrier)-H + L-cysteine = (sulfur carrier)-SH + L-alanine. It functions in the pathway cofactor biosynthesis; iron-sulfur cluster biosynthesis. Its function is as follows. Master enzyme that delivers sulfur to a number of partners involved in Fe-S cluster assembly, tRNA modification or cofactor biosynthesis. Catalyzes the removal of elemental sulfur atoms from cysteine to produce alanine. Functions as a sulfur delivery protein for Fe-S cluster synthesis onto IscU, an Fe-S scaffold assembly protein, as well as other S acceptor proteins. The chain is Cysteine desulfurase IscS from Acinetobacter baumannii (strain SDF).